The chain runs to 236 residues: RNA-binding protein 24 (236 aa).

Positions 11–88 (TKIFVGGLPY…RKANVNLAYL (78 aa)) constitute an RRM domain. The necessary for interaction with EIF4E stretch occupies residues 175–199 (QYPYAASPAAAGYVTTGGYSYAVQQ).

In terms of assembly, interacts with EIF4E; this interaction prevents EIF4E from binding to p53/TP53 mRNA and inhibits the assembly of translation initiation complex. As to expression, expressed strongly in heart and skeletal muscles. Weakly expressed in intestine, aorta, liver, lung, kidney, uterus and bladder.

The protein resides in the nucleus. Its subcellular location is the cytoplasm. Its function is as follows. Multifunctional RNA-binding protein involved in the regulation of pre-mRNA splicing, mRNA stability and mRNA translation important for cell fate decision and differentiation. Plays a major role in pre-mRNA alternative splicing regulation. Mediates preferentially muscle-specific exon inclusion in numerous mRNAs important for striated cardiac and skeletal muscle cell differentiation. Binds to intronic splicing enhancer (ISE) composed of stretches of GU-rich motifs localized in flanking intron of exon that will be included by alternative splicing. Involved in embryonic stem cell (ESC) transition to cardiac cell differentiation by promoting pre-mRNA alternative splicing events of several pluripotency and/or differentiation genes. Plays a role in the regulation of mRNA stability. Binds to 3'-untranslated region (UTR) AU-rich elements in target transcripts, such as CDKN1A and MYOG, leading to maintain their stabilities. Involved in myogenic differentiation by regulating MYOG levels. Binds to multiple regions in the mRNA 3'-UTR of TP63, hence inducing its destabilization. Also promotes the destabilization of the CHRM2 mRNA via its binding to a region in the coding sequence. Plays a role in the regulation of mRNA translation. Mediates repression of p53/TP53 mRNA translation through its binding to U-rich element in the 3'-UTR, hence preventing EIF4E from binding to p53/TP53 mRNA and translation initiation. Binds to a huge amount of mRNAs. Required for embryonic heart development, sarcomer and M-band formation in striated muscles. Together with RBM20, promotes the expression of short isoforms of PDLIM5/ENH in cardiomyocytes. This Mus musculus (Mouse) protein is RNA-binding protein 24.